The primary structure comprises 262 residues: Ferric siderophore reductase (262 aa).

Residues cysteine 244, cysteine 245, cysteine 256, and cysteine 259 each coordinate [2Fe-2S] cluster.

In terms of assembly, monomer. It depends on [2Fe-2S] cluster as a cofactor.

Its subcellular location is the cytoplasm. The protein localises to the cell inner membrane. With respect to regulation, displays pH dependent redox properties. SufD is necessary for the stability of FhuF. Siderophore-iron reductase which is involved in iron removal from the hydroxamate-type siderophores coprogen, ferrichrome and ferrioxamine B after their transport into the cell. Binds both the iron-loaded and the apo forms of ferrichrome. This chain is Ferric siderophore reductase (fhuF), found in Escherichia coli (strain K12).